The following is a 384-amino-acid chain: N-acetyldiaminopimelate deacetylase (384 aa).

The active site involves D74. The active-site Proton acceptor is E133.

Belongs to the peptidase M20A family. N-acetyldiaminopimelate deacetylase subfamily.

It catalyses the reaction N-acetyl-(2S,6S)-2,6-diaminopimelate + H2O = (2S,6S)-2,6-diaminopimelate + acetate. It functions in the pathway amino-acid biosynthesis; L-lysine biosynthesis via DAP pathway; LL-2,6-diaminopimelate from (S)-tetrahydrodipicolinate (acetylase route): step 3/3. Catalyzes the conversion of N-acetyl-diaminopimelate to diaminopimelate and acetate. The polypeptide is N-acetyldiaminopimelate deacetylase (Pediococcus pentosaceus (strain ATCC 25745 / CCUG 21536 / LMG 10740 / 183-1w)).